The sequence spans 494 residues: UPF0371 protein M6_Spy1067 (494 aa).

This sequence belongs to the UPF0371 family.

The protein is UPF0371 protein M6_Spy1067 of Streptococcus pyogenes serotype M6 (strain ATCC BAA-946 / MGAS10394).